Consider the following 754-residue polypeptide: tRNA(Met) cytidine acetyltransferase TmcA (754 aa).

The disordered stretch occupies residues 181–202 (GISFDAAPPRVPTEKDRRSPRR). Basic and acidic residues predominate over residues 192–202 (PTEKDRRSPRR). Residues Q212, 236–245 (GRGKSSAAGL), and R383 contribute to the ATP site. An N-acetyltransferase domain is found at 418–603 (VSYRALSPDD…YSALMTRPLS (186 aa)). Acetyl-CoA contacts are provided by residues 529-531 (IAT), 536-542 (RSSGLGS), and E568.

Belongs to the RNA cytidine acetyltransferase family. TmcA subfamily.

It localises to the cytoplasm. It carries out the reaction cytidine(34) in elongator tRNA(Met) + acetyl-CoA + ATP + H2O = N(4)-acetylcytidine(34) in elongator tRNA(Met) + ADP + phosphate + CoA + H(+). Catalyzes the formation of N(4)-acetylcytidine (ac(4)C) at the wobble position of tRNA(Met), by using acetyl-CoA as an acetyl donor and ATP (or GTP). This Haloferax volcanii (strain ATCC 29605 / DSM 3757 / JCM 8879 / NBRC 14742 / NCIMB 2012 / VKM B-1768 / DS2) (Halobacterium volcanii) protein is tRNA(Met) cytidine acetyltransferase TmcA.